Reading from the N-terminus, the 116-residue chain is Fluoride-specific ion channel FluC 1 (116 aa).

4 helical membrane-spanning segments follow: residues 1 to 21 (MGKL…RYTV), 31 to 51 (IPAG…FLTF), 58 to 78 (MVYL…TFAY), and 92 to 112 (FFLN…IAYL). Na(+) is bound by residues Gly-68 and Thr-71.

This sequence belongs to the fluoride channel Fluc/FEX (TC 1.A.43) family.

It localises to the cell membrane. The catalysed reaction is fluoride(in) = fluoride(out). With respect to regulation, na(+) is not transported, but it plays an essential structural role and its presence is essential for fluoride channel function. Functionally, fluoride-specific ion channel. Important for reducing fluoride concentration in the cell, thus reducing its toxicity. This Methanosarcina barkeri (strain Fusaro / DSM 804) protein is Fluoride-specific ion channel FluC 1.